A 361-amino-acid polypeptide reads, in one-letter code: MALTLEALAARFGGEIVGDGRCEVGALAPLDQAGPRQLAFLANPKYLAQVETTGAGAVLIAPGDLEKLGAAAHGRNFIVTPNPYAYFARVAQMFIDLAAPPRAAGVHPSATIDPAAQVAASAVIGPHVTVEAGAVIGERAQLDANVFVGRGTRIGDDSHLYPNVAIYHGCTLGPRAIVHSGAVIGSDGFGFAPDFVGEGDARTGAWVKIPQVGGVKVGPDVEIGANTTIDRGAMADTVIDECVKIDNLVQIGHNCRIGAYTVIAGCAGIAGSTTIGKHCMIGGAVGIAGHVTLGDYVIVTAKSGVSKSLPKAGIYTSAFPAVEHGDWNRSAALVRNLDKLRDRIKALETALVAREGDAGGA.

The Proton acceptor role is filled by histidine 253.

This sequence belongs to the transferase hexapeptide repeat family. LpxD subfamily. Homotrimer.

The catalysed reaction is a UDP-3-O-[(3R)-3-hydroxyacyl]-alpha-D-glucosamine + a (3R)-hydroxyacyl-[ACP] = a UDP-2-N,3-O-bis[(3R)-3-hydroxyacyl]-alpha-D-glucosamine + holo-[ACP] + H(+). The protein operates within bacterial outer membrane biogenesis; LPS lipid A biosynthesis. In terms of biological role, catalyzes the N-acylation of UDP-3-O-acylglucosamine using 3-hydroxyacyl-ACP as the acyl donor. Is involved in the biosynthesis of lipid A, a phosphorylated glycolipid that anchors the lipopolysaccharide to the outer membrane of the cell. This Burkholderia mallei (strain ATCC 23344) protein is UDP-3-O-acylglucosamine N-acyltransferase.